Reading from the N-terminus, the 128-residue chain is Glycine cleavage system H protein (128 aa).

One can recognise a Lipoyl-binding domain in the interval 24–105; sequence SLTIGVTDHA…AYAAWLFKLK (82 aa). Lys65 bears the N6-lipoyllysine mark.

This sequence belongs to the GcvH family. The glycine cleavage system is composed of four proteins: P, T, L and H. The cofactor is (R)-lipoate.

The glycine cleavage system catalyzes the degradation of glycine. The H protein shuttles the methylamine group of glycine from the P protein to the T protein. The sequence is that of Glycine cleavage system H protein from Aromatoleum aromaticum (strain DSM 19018 / LMG 30748 / EbN1) (Azoarcus sp. (strain EbN1)).